The following is a 127-amino-acid chain: Fluoride-specific ion channel FluC (127 aa).

4 helical membrane-spanning segments follow: residues 3 to 23 (LVFL…YFVG), 38 to 58 (LGTF…GHLA), 67 to 87 (FGIF…SYGL), and 102 to 122 (ISYV…GWFL). Na(+)-binding residues include G77 and T80.

It belongs to the fluoride channel Fluc/FEX (TC 1.A.43) family.

The protein localises to the cell inner membrane. It carries out the reaction fluoride(in) = fluoride(out). Its activity is regulated as follows. Na(+) is not transported, but it plays an essential structural role and its presence is essential for fluoride channel function. Its function is as follows. Fluoride-specific ion channel. Important for reducing fluoride concentration in the cell, thus reducing its toxicity. In Helicobacter acinonychis (strain Sheeba), this protein is Fluoride-specific ion channel FluC.